The following is a 294-amino-acid chain: 33 kDa chaperonin (294 aa).

2 disulfides stabilise this stretch: Cys239/Cys241 and Cys272/Cys275.

It belongs to the HSP33 family. In terms of processing, under oxidizing conditions two disulfide bonds are formed involving the reactive cysteines. Under reducing conditions zinc is bound to the reactive cysteines and the protein is inactive.

The protein localises to the cytoplasm. Functionally, redox regulated molecular chaperone. Protects both thermally unfolding and oxidatively damaged proteins from irreversible aggregation. Plays an important role in the bacterial defense system toward oxidative stress. This chain is 33 kDa chaperonin, found in Lacticaseibacillus casei (strain BL23) (Lactobacillus casei).